A 477-amino-acid chain; its full sequence is 3-isopropylmalate dehydratase large subunit 1 (477 aa).

Residues Cys-357, Cys-417, and Cys-420 each coordinate [4Fe-4S] cluster.

It belongs to the aconitase/IPM isomerase family. LeuC type 1 subfamily. As to quaternary structure, heterodimer of LeuC and LeuD. Requires [4Fe-4S] cluster as cofactor.

The catalysed reaction is (2R,3S)-3-isopropylmalate = (2S)-2-isopropylmalate. It functions in the pathway amino-acid biosynthesis; L-leucine biosynthesis; L-leucine from 3-methyl-2-oxobutanoate: step 2/4. In terms of biological role, catalyzes the isomerization between 2-isopropylmalate and 3-isopropylmalate, via the formation of 2-isopropylmaleate. The chain is 3-isopropylmalate dehydratase large subunit 1 from Bradyrhizobium diazoefficiens (strain JCM 10833 / BCRC 13528 / IAM 13628 / NBRC 14792 / USDA 110).